The sequence spans 302 residues: Tissue factor pathway inhibitor (302 aa).

Positions 1–28 (MTNKLKKDHAFWAAVCLLLSIVPELLNA) are cleaved as a signal peptide. BPTI/Kunitz inhibitor domains are found at residues 53 to 103 (CAMK…RKTC), 124 to 174 (CFLE…RNTC), and 222 to 272 (CLEP…NRAC). 9 disulfides stabilise this stretch: C53/C103, C62/C86, C78/C99, C124/C174, C133/C157, C149/C170, C222/C272, C231/C255, and C247/C268. A glycan (N-linked (GlcNAc...) asparagine) is linked at N144. N-linked (GlcNAc...) asparagine glycosylation is found at N251 and N261.

As to expression, most abundant in heart, lung, kidney, and aortic endothelial cells.

The protein localises to the secreted. Its function is as follows. Inhibits factor X (X(a)) directly and, in a Xa-dependent way, inhibits VIIa/tissue factor activity, presumably by forming a quaternary Xa/LACI/VIIa/TF complex. It possesses an antithrombotic action and also the ability to associate with lipoproteins in plasma. The protein is Tissue factor pathway inhibitor (Tfpi) of Rattus norvegicus (Rat).